The sequence spans 283 residues: Elongation factor Ts (283 aa).

An involved in Mg(2+) ion dislocation from EF-Tu region spans residues 80–83; sequence TDFV.

Belongs to the EF-Ts family.

It localises to the cytoplasm. Associates with the EF-Tu.GDP complex and induces the exchange of GDP to GTP. It remains bound to the aminoacyl-tRNA.EF-Tu.GTP complex up to the GTP hydrolysis stage on the ribosome. In Shigella boydii serotype 18 (strain CDC 3083-94 / BS512), this protein is Elongation factor Ts.